The following is a 113-amino-acid chain: Large ribosomal subunit protein uL22 (113 aa).

The protein belongs to the universal ribosomal protein uL22 family. In terms of assembly, part of the 50S ribosomal subunit.

This protein binds specifically to 23S rRNA; its binding is stimulated by other ribosomal proteins, e.g. L4, L17, and L20. It is important during the early stages of 50S assembly. It makes multiple contacts with different domains of the 23S rRNA in the assembled 50S subunit and ribosome. Its function is as follows. The globular domain of the protein is located near the polypeptide exit tunnel on the outside of the subunit, while an extended beta-hairpin is found that lines the wall of the exit tunnel in the center of the 70S ribosome. This is Large ribosomal subunit protein uL22 from Bacillus pumilus (strain SAFR-032).